A 286-amino-acid polypeptide reads, in one-letter code: 4-diphosphocytidyl-2-C-methyl-D-erythritol kinase (286 aa).

Lys-13 is an active-site residue. Residue 101 to 111 (PQGAGLGGGSS) participates in ATP binding. Asp-143 is a catalytic residue.

Belongs to the GHMP kinase family. IspE subfamily.

The enzyme catalyses 4-CDP-2-C-methyl-D-erythritol + ATP = 4-CDP-2-C-methyl-D-erythritol 2-phosphate + ADP + H(+). It participates in isoprenoid biosynthesis; isopentenyl diphosphate biosynthesis via DXP pathway; isopentenyl diphosphate from 1-deoxy-D-xylulose 5-phosphate: step 3/6. Functionally, catalyzes the phosphorylation of the position 2 hydroxy group of 4-diphosphocytidyl-2C-methyl-D-erythritol. The chain is 4-diphosphocytidyl-2-C-methyl-D-erythritol kinase from Idiomarina loihiensis (strain ATCC BAA-735 / DSM 15497 / L2-TR).